Reading from the N-terminus, the 1996-residue chain is Protein Shroom3 (1996 aa).

In terms of domain architecture, PDZ spans Tyr-25 to Val-110. The interval Lys-150 to Pro-173 is disordered. Ser-213 is subject to Phosphoserine. 5 disordered regions span residues Asn-340–Ser-389, Glu-437–Tyr-468, Asp-568–Asp-629, Arg-673–Phe-772, and Phe-788–Ser-1053. A phosphoserine mark is found at Ser-439 and Ser-443. Positions Lys-700–Arg-718 are enriched in basic and acidic residues. The segment covering His-750–Ala-768 has biased composition (low complexity). Over residues Thr-814 to Asn-823 the composition is skewed to polar residues. Ser-816 bears the Phosphoserine mark. Composition is skewed to basic and acidic residues over residues Glu-826–Glu-836 and Gln-846–Ser-859. 2 stretches are compositionally biased toward polar residues: residues Pro-862–Ala-871 and Arg-887–Ser-896. Ser-890 is subject to Phosphoserine. Positions Glu-897–Gly-909 are enriched in basic and acidic residues. 2 positions are modified to phosphoserine: Ser-910 and Ser-913. Positions Ile-928–Gly-1030 constitute an ASD1 domain. Residues Ala-950–Ala-964 show a composition bias toward low complexity. At Ser-970 the chain carries Phosphoserine. A compositionally biased stretch (basic and acidic residues) spans Leu-1011 to Asn-1027. 2 positions are modified to phosphoserine: Ser-1069 and Ser-1072. 4 disordered regions span residues Lys-1093–Arg-1115, Ser-1137–Glu-1223, Glu-1315–Lys-1573, and Ser-1627–Asp-1665. The span at Ser-1137 to Gln-1148 shows a compositional bias: low complexity. Position 1221 is a phosphoserine (Ser-1221). Positions Tyr-1366–Arg-1375 are enriched in polar residues. The span at Cys-1403–Arg-1417 shows a compositional bias: basic and acidic residues. Ser-1441 is subject to Phosphoserine. Residues Lys-1459–Pro-1472 show a composition bias toward polar residues. Basic and acidic residues predominate over residues Pro-1498–Pro-1515. Residues Glu-1524 to Gln-1536 show a composition bias toward pro residues. Positions Pro-1634–Gln-1649 are enriched in polar residues. A compositionally biased stretch (basic and acidic residues) spans Leu-1651–Asp-1665. One can recognise an ASD2 domain in the interval Glu-1669–Pro-1957.

Belongs to the shroom family. Interacts with F-actin. Interacts with ROCK1.

The protein resides in the cell junction. The protein localises to the adherens junction. It localises to the cytoplasm. Its subcellular location is the cytoskeleton. It is found in the apical cell membrane. Controls cell shape changes in the neuroepithelium during neural tube closure. Induces apical constriction in epithelial cells by promoting the apical accumulation of F-actin and myosin II, and probably by bundling stress fibers. Induces apicobasal cell elongation by redistributing gamma-tubulin and directing the assembly of robust apicobasal microtubule arrays. This Homo sapiens (Human) protein is Protein Shroom3 (SHROOM3).